A 308-amino-acid polypeptide reads, in one-letter code: Cytochrome b (308 aa).

The next 4 membrane-spanning stretches (helical) occupy residues 1–21 (FGSL…LLAM), 45–66 (WLIR…YLHI), 81–101 (WNIG…GYVL), and 146–166 (FFAL…IHLT). Heme b is bound by residues H51 and H65. Positions 150 and 164 each coordinate heme b. H169 provides a ligand contact to a ubiquinone. The next 3 membrane-spanning stretches (helical) occupy residues 194–214 (TKDA…AMFS), 256–276 (LGGV…PLLH), and 288–308 (LSQF…WIGS).

The protein belongs to the cytochrome b family. As to quaternary structure, the cytochrome bc1 complex contains 11 subunits: 3 respiratory subunits (MT-CYB, CYC1 and UQCRFS1), 2 core proteins (UQCRC1 and UQCRC2) and 6 low-molecular weight proteins (UQCRH/QCR6, UQCRB/QCR7, UQCRQ/QCR8, UQCR10/QCR9, UQCR11/QCR10 and a cleavage product of UQCRFS1). This cytochrome bc1 complex then forms a dimer. The cofactor is heme b.

The protein resides in the mitochondrion inner membrane. Its function is as follows. Component of the ubiquinol-cytochrome c reductase complex (complex III or cytochrome b-c1 complex) that is part of the mitochondrial respiratory chain. The b-c1 complex mediates electron transfer from ubiquinol to cytochrome c. Contributes to the generation of a proton gradient across the mitochondrial membrane that is then used for ATP synthesis. This chain is Cytochrome b (MT-CYB), found in Zaratornis stresemanni (White-cheeked cotinga).